Reading from the N-terminus, the 248-residue chain is MAGHSKWANIQHRKGRQDAKRGKIFTKMAKDIILAAKGGGDPAMNPSLRLAISKAKAVNMPNDKIDTAIKKGTGELAGGDISEVMYEGYGPGGVAILVEAATDNKNRTVAEVRHALGKGGGSMGEAGCVAWMFDKKGVMVFDAEKYTEDQLLEIGLEAGAEDVIAEDESLEVHCMPEDFSEVQKAFEAAECEAKSSDLAFVPKNLVEVDVPTAKKLMNLMEKLEDNDDVQNVHVNADFPDELMAEMED.

The segment at 1 to 21 is disordered; that stretch reads MAGHSKWANIQHRKGRQDAKR.

The protein belongs to the TACO1 family.

It is found in the cytoplasm. This chain is Probable transcriptional regulatory protein Desal_2886, found in Maridesulfovibrio salexigens (strain ATCC 14822 / DSM 2638 / NCIMB 8403 / VKM B-1763) (Desulfovibrio salexigens).